Reading from the N-terminus, the 780-residue chain is Cullin-5 (780 aa).

Ser34 bears the Phosphoserine mark. Residue Thr210 is modified to Phosphothreonine. The region spanning 711–772 (RILRTQEAII…HKYIRRDESD (62 aa)) is the Cullin neddylation domain. Lys724 is covalently cross-linked (Glycyl lysine isopeptide (Lys-Gly) (interchain with G-Cter in NEDD8)).

The protein belongs to the cullin family. As to quaternary structure, component of multiple cullin-5-RING E3 ubiquitin-protein ligase complexes (ECS complexes, also named CRL5 complexes) formed of CUL5, Elongin BC (ELOB and ELOC), RNF7/RBX2 and a variable SOCS box domain-containing protein as substrate-specific recognition component. CUL5-containing ECS complexes specifically contain RNF7/RBX2, and not RBX1, as catalytic subunit. Component of the ECS(ASB2) complex with the substrate recognition component ASB2. Component of the ECS(ASB6) complex with the substrate recognition component ASB6. Component of the ECS(ASB7) complex with the substrate recognition component ASB7. Component of the ECS(ASB9) complex with the substrate recognition component ASB9. Component of the ECS(ASB11) complex with the substrate recognition component ASB11. Component of the ECS(ASB12) complex with the substrate recognition component ASB12. Component of the ECS(LRRC41) complex with the substrate recognition component LRRC41. Component of the ECS(SOCS1) complex with the substrate recognition component SOCS1. Component of the ECS(SOCS2) complex with the substrate recognition component SOCS2. Component of the ECS(WSB1) complex with the substrate recognition subunit WSB1. Component of the ECS(SOCS3) complex with the substrate recognition component SOCS3. Component of the ECS(SOCS7) complex with the substrate recognition component SOCS7. Component of the ECS(SPSB1) complex with the substrate recognition component SPSB1. Component of the ECS(SPSB3) complex with the substrate recognition component SPSB3. Component of the ECS(SPSB2) complex with the substrate recognition component SPSB2. Component of the ECS(SPSB4) complex with the substrate recognition component SPSB4. Component of the ECS(RAB40) complex with the substrate recognition subunit RAB40A, RAB40B or RAB40C. Component of the ECS(KLHDC1) complex with the substrate recognition component KLHDC1. Component of the ECS(PCMTD1) complex with the substrate recognition subunit PCMTD1. May also form complexes containing RBX1 and ELOA or VHL; additional evidence is however required to confirm this result in vivo. Interacts (when neddylated) with ARIH2; leading to activate the E3 ligase activity of ARIH2. Interacts with ERCC6; the interaction is induced by DNA damaging agents or inhibitors of RNA polymerase II elongation. Interacts with ELOA (via the BC-box). Interacts (unneddylated form) with DCUN1D1, DCUN1D2, DCUN1D3, DCUN1D4 and DCUN1D5; these interactions promote the cullin neddylation. Post-translationally, neddylated; which enhances the ubiquitination activity of ECS complexes and prevents binding of the inhibitor CAND1. Deneddylated via its interaction with the COP9 signalosome (CSN).

Its subcellular location is the nucleus. It functions in the pathway protein modification; protein ubiquitination. Functionally, core component of multiple cullin-5-RING E3 ubiquitin-protein ligase complexes (ECS complexes, also named CRL5 complexes), which mediate the ubiquitination and subsequent proteasomal degradation of target proteins. Acts a scaffold protein that contributes to catalysis through positioning of the substrate and the ubiquitin-conjugating enzyme. The functional specificity of the E3 ubiquitin-protein ligase complex depends on the variable SOCS box-containing substrate recognition component. Acts as a key regulator of neuron positioning during cortex development: component of various SOCS-containing ECS complexes, such as the ECS(SOCS7) complex, that regulate reelin signaling by mediating ubiquitination and degradation of DAB1. ECS(SOCS1) seems to direct ubiquitination of JAK2. The ECS(SOCS2) complex mediates the ubiquitination and subsequent proteasomal degradation of phosphorylated EPOR and GHR. The ECS(SPSB3) complex catalyzes ubiquitination of nuclear CGAS. ECS(KLHDC1) complex is part of the DesCEND (destruction via C-end degrons) pathway and mediates ubiquitination and degradation of truncated SELENOS selenoprotein produced by failed UGA/Sec decoding, which ends with a glycine. The ECS(ASB9) complex mediates ubiquitination and degradation of CKB. As part of some ECS complex, promotes 'Lys-11'-linked ubiquitination and degradation of BTRC. As part of a multisubunit ECS complex, polyubiquitinates monoubiquitinated POLR2A. As part of the ECS(RAB40C) complex, mediates ANKRD28 ubiquitination and degradation, thereby regulating protein phosphatase 6 (PP6) complex activity and focal adhesion assembly during cell migration. As part of the ECS(RAB40A) complex, mediates RHOU 'Lys-48'-linked ubiquitination and degradation, thus inhibiting focal adhesion disassembly during cell migration. As part of the ECS(RAB40B) complex, mediates LIMA1/EPLIN and RAP2 ubiquitination, thereby regulating actin cytoskeleton dynamics and stress fiber formation during cell migration. May form a cell surface vasopressin receptor. The protein is Cullin-5 of Pongo abelii (Sumatran orangutan).